A 373-amino-acid polypeptide reads, in one-letter code: NADPH-dependent 3-keto-steroid reductase Hsd3b5 (373 aa).

Residues 10–15 (GAGGFL), Tyr-155, and Lys-159 contribute to the NADP(+) site. Lys-159 serves as the catalytic Proton donor. A helical transmembrane segment spans residues 288–308 (LPLLYWLAFLLETVSFLLRPF). At Lys-350 the chain carries N6-acetyllysine.

This sequence belongs to the 3-beta-HSD family. As to expression, expressed predominantly in male liver.

It is found in the endoplasmic reticulum membrane. The protein localises to the mitochondrion membrane. It catalyses the reaction a 3beta-hydroxysteroid + NADP(+) = a 3-oxosteroid + NADPH + H(+). The enzyme catalyses 5alpha-androstane-3beta,17beta-diol + NADP(+) = 17beta-hydroxy-5alpha-androstan-3-one + NADPH + H(+). The catalysed reaction is 3beta-hydroxy-5alpha-androstan-17-one + NADP(+) = 5alpha-androstan-3,17-dione + NADPH + H(+). It functions in the pathway steroid metabolism. In terms of biological role, responsible for the reduction of the oxo group on the C-3 of 5alpha-androstane steroids. Catalyzes the conversion of dihydrotestosterone to its inactive form 5alpha-androstanediol, that does not bind androgen receptor/AR. Also converts androstanedione, a precursor of testosterone and estrone, to epiandrosterone. Does not function as an isomerase. This chain is NADPH-dependent 3-keto-steroid reductase Hsd3b5, found in Rattus norvegicus (Rat).